A 1264-amino-acid chain; its full sequence is Kinesin-like protein KIN-14B (1264 aa).

A compositionally biased stretch (polar residues) spans 1 to 10; the sequence is MAEQKSTNMW. Residues 1–52 are disordered; sequence MAEQKSTNMWNWEVTGFESKKSPSSEEGVHRTPSSMLRRYSIPKNSLPPHSS. Positions 18–30 are enriched in basic and acidic residues; the sequence is ESKKSPSSEEGVH. A coiled-coil region spans residues 53 to 84; that stretch reads ELASKVQSLKDKVQLAKDDYVGLRQEATDLQE. One can recognise a Kinesin motor domain in the interval 138 to 452; it reads NVKVFCRARP…LNYAARARNT (315 aa). An ATP-binding site is contributed by 219–226; the sequence is GQTHAGKT. 3 coiled-coil regions span residues 462-511, 545-592, and 617-640; these read IKKW…YNEV, QLRN…LKSD, and TKKLEEELKKRDALIERLHEENEK. Positions 588–615 are disordered; that stretch reads ALKSDMTRSRDPLEPQPRAAENTLDSSA. Basic and acidic residues predominate over residues 589–600; sequence LKSDMTRSRDPL. Over residues 652–668 the composition is skewed to low complexity; sequence SSTQVSSPSSKASPTVQ. Disordered regions lie at residues 652 to 684 and 1117 to 1136; these read SSTQVSSPSSKASPTVQPADVDSAGTLPSSVDK and PEQEDNLQDEKRPSIDSISS.

This sequence belongs to the TRAFAC class myosin-kinesin ATPase superfamily. Kinesin family. KIN-14 subfamily. In terms of assembly, homodimer and heterodimer with KCA1. Interacts with CDKA-1. Interacts with At4g14310. As to expression, expressed in roots, leaves, stems and flowers.

The protein localises to the cell membrane. Kinesin-like protein required for chloroplast movements and anchor to the plasma membrane. Mediates chloroplast movement via chloroplast actin (cp-actin) filaments. Required for the chloroplast avoidance response under high intensity blue light. Mediates redundantly with CHUP1 the nuclear avoidance response under high intensity blue light. May be involved in division plane determination. This is Kinesin-like protein KIN-14B from Arabidopsis thaliana (Mouse-ear cress).